Here is a 222-residue protein sequence, read N- to C-terminus: Sugar fermentation stimulation protein homolog (222 aa).

The protein belongs to the SfsA family.

This chain is Sugar fermentation stimulation protein homolog, found in Thermotoga maritima (strain ATCC 43589 / DSM 3109 / JCM 10099 / NBRC 100826 / MSB8).